Here is a 497-residue protein sequence, read N- to C-terminus: UDP-N-acetylmuramoyl-L-alanyl-D-glutamate--2,6-diaminopimelate ligase (497 aa).

Serine 29 is a binding site for UDP-N-acetyl-alpha-D-muramoyl-L-alanyl-D-glutamate. ATP is bound at residue 116 to 122; sequence GTNGKTT. UDP-N-acetyl-alpha-D-muramoyl-L-alanyl-D-glutamate-binding positions include asparagine 157, 158–159, serine 185, glutamine 191, and arginine 193; that span reads TT. Lysine 225 bears the N6-carboxylysine mark. Meso-2,6-diaminopimelate is bound by residues arginine 392, 416–419, glycine 467, and glutamate 471; that span reads DNPR. The Meso-diaminopimelate recognition motif signature appears at 416-419; the sequence is DNPR.

The protein belongs to the MurCDEF family. MurE subfamily. The cofactor is Mg(2+). In terms of processing, carboxylation is probably crucial for Mg(2+) binding and, consequently, for the gamma-phosphate positioning of ATP.

Its subcellular location is the cytoplasm. It carries out the reaction UDP-N-acetyl-alpha-D-muramoyl-L-alanyl-D-glutamate + meso-2,6-diaminopimelate + ATP = UDP-N-acetyl-alpha-D-muramoyl-L-alanyl-gamma-D-glutamyl-meso-2,6-diaminopimelate + ADP + phosphate + H(+). The protein operates within cell wall biogenesis; peptidoglycan biosynthesis. Catalyzes the addition of meso-diaminopimelic acid to the nucleotide precursor UDP-N-acetylmuramoyl-L-alanyl-D-glutamate (UMAG) in the biosynthesis of bacterial cell-wall peptidoglycan. In Buchnera aphidicola subsp. Acyrthosiphon pisum (strain APS) (Acyrthosiphon pisum symbiotic bacterium), this protein is UDP-N-acetylmuramoyl-L-alanyl-D-glutamate--2,6-diaminopimelate ligase.